The following is a 302-amino-acid chain: Diacetylchitobiose uptake system permease protein NgcG (302 aa).

Transmembrane regions (helical) follow at residues 40–60 (LLIL…MSSF), 99–119 (VIVV…CAYV), 131–151 (IYYV…VPLF), 166–186 (LILT…YSFF), 221–241 (AAVA…PVAL), and 268–288 (GALF…YCVF). Residues 95-288 (FLNSVIVVVS…VPVLLVYCVF (194 aa)) form the ABC transmembrane type-1 domain.

The protein belongs to the binding-protein-dependent transport system permease family. In terms of assembly, the complex is composed of two ATP-binding proteins (MsiK), two transmembrane proteins (NgcF and NgcG) and a solute-binding protein (NgcE).

It is found in the cell membrane. Its function is as follows. Part of the ABC transporter complex NgcEFG-MsiK involved in N,N'-diacetylchitobiose ((GlcNAc)2) uptake. Responsible for the translocation of the substrate across the membrane. The sequence is that of Diacetylchitobiose uptake system permease protein NgcG from Streptomyces coelicolor (strain ATCC BAA-471 / A3(2) / M145).